The following is a 490-amino-acid chain: Phenylacetaldehyde synthase (490 aa).

3 residues coordinate L-phenylalanine: proline 92, histidine 193, and histidine 308. The residue at position 309 (lysine 309) is an N6-(pyridoxal phosphate)lysine. Phenylalanine 338 contacts L-phenylalanine.

Belongs to the group II decarboxylase family. As to quaternary structure, homodimer. The cofactor is pyridoxal 5'-phosphate. As to expression, expressed in roots, rosette leaves, stems, cauline leaves and flowers.

The enzyme catalyses L-phenylalanine + O2 + H2O + H(+) = 2-phenylacetaldehyde + H2O2 + NH4(+) + CO2. The catalysed reaction is L-dopa + O2 + H2O + H(+) = 3,4-dihydroxyphenylacetaldehyde + H2O2 + NH4(+) + CO2. Bifunctional enzyme that catalyzes the decarboxylation of L-phenylalanine to 2-phenylethylamine, which is then oxidized to form 2-phenylacetaldehyde, a constituent of floral scent. 2-phenylacetaldehyde is a precursor of 2-phenylethanol, another constituent of floral scent. Catalyzes both the decarboxylation and deamination of L-dopa to 3,4-dihydroxylphenylacetaldehyde (DHPAA). This Arabidopsis thaliana (Mouse-ear cress) protein is Phenylacetaldehyde synthase.